Reading from the N-terminus, the 579-residue chain is Laccase-24 (579 aa).

An N-terminal signal peptide occupies residues 1–23; it reads MARSWSLLLLPFALALVASVAQA. Plastocyanin-like domains are found at residues 31 to 148 and 159 to 322; these read NVGN…PRGG and EEVV…YGGG. 2 N-linked (GlcNAc...) asparagine glycosylation sites follow: Asn-34 and Asn-78. Cu cation-binding residues include His-82 and His-84. 2 N-linked (GlcNAc...) asparagine glycosylation sites follow: Asn-110 and Asn-116. 2 residues coordinate Cu cation: His-127 and His-129. Residues Asn-204, Asn-209, Asn-219, Asn-241, Asn-312, Asn-337, Asn-348, Asn-398, Asn-405, Asn-444, and Asn-462 are each glycosylated (N-linked (GlcNAc...) asparagine). The region spanning 425–563 is the Plastocyanin-like 3 domain; sequence DFPDTPPIVF…GMVFEVQNGP (139 aa). Positions 480, 483, and 485 each coordinate Cu cation. Asn-500 carries N-linked (GlcNAc...) asparagine glycosylation. The Cu cation site is built by His-542, Cys-543, His-544, and His-548.

It belongs to the multicopper oxidase family. Cu cation serves as cofactor.

The protein resides in the secreted. It localises to the extracellular space. Its subcellular location is the apoplast. It carries out the reaction 4 hydroquinone + O2 = 4 benzosemiquinone + 2 H2O. Its function is as follows. Lignin degradation and detoxification of lignin-derived products. The polypeptide is Laccase-24 (LAC24) (Oryza sativa subsp. japonica (Rice)).